The chain runs to 323 residues: Transcription factor MYB108 (323 aa).

HTH myb-type domains lie at 16 to 68 (EMDL…LNYL) and 69 to 123 (RPDV…QKHA). 2 consecutive DNA-binding regions (H-T-H motif) follow at residues 44–68 (WNSL…LNYL) and 96–119 (WSKI…RTRV).

In terms of assembly, interacts with BOI, but not with BRG1. Ubiquitinated in vitro by BOI. In terms of tissue distribution, expressed specifically in flowers. Restricted to anthers in maturing flowers. Strongest expression in the vascular and connective tissue where the anther attaches to the filament. Not detected in pollen.

The protein resides in the nucleus. Functionally, transcription factor contributing to the regulation of stamen maturation and male fertility in response to jasmonate signaling. Required for correct timing of anther dehiscence. Acts as a negative regulator of abscisic acid-induced cell death. Not involved in the regulation of BOI. Regulated by MYB21 and at a lower level by MYB24. Negatively regulated by the proteasome in an SCF(COI1) E3 ubiquitin-protein ligase complex-dependent manner. This is Transcription factor MYB108 (MYB108) from Arabidopsis thaliana (Mouse-ear cress).